A 312-amino-acid polypeptide reads, in one-letter code: Cell division control protein 2 homolog D (312 aa).

The Protein kinase domain occupies 14 to 304 (FVKLEKVGEG…AKKAMEHPYF (291 aa)). ATP contacts are provided by residues 20–28 (VGEGTYGKV) and K43. T24 is modified (phosphothreonine). At Y25 the chain carries Phosphotyrosine. D145 acts as the Proton acceptor in catalysis. T179 bears the Phosphothreonine; by CAK mark.

The protein belongs to the protein kinase superfamily. CMGC Ser/Thr protein kinase family. CDC2/CDKX subfamily.

The catalysed reaction is L-seryl-[protein] + ATP = O-phospho-L-seryl-[protein] + ADP + H(+). It catalyses the reaction L-threonyl-[protein] + ATP = O-phospho-L-threonyl-[protein] + ADP + H(+). It carries out the reaction [DNA-directed RNA polymerase] + ATP = phospho-[DNA-directed RNA polymerase] + ADP + H(+). In terms of biological role, plays a key role in the control of the eukaryotic cell cycle. In Antirrhinum majus (Garden snapdragon), this protein is Cell division control protein 2 homolog D (CDC2D).